We begin with the raw amino-acid sequence, 489 residues long: Cytochrome P450 302a1, mitochondrial (489 aa).

Cysteine 434 contacts heme.

It belongs to the cytochrome P450 family. Requires heme as cofactor. In terms of tissue distribution, complex coexpression pattern of dib (disembodied) and sad (shade) in the early embryo that restricts to the prothoracic gland cells of the developing ring gland during late embryogenesis. In larvae and adult, coexpression is seen in prothoracic gland and follicle cells of the ovary. In adults, coexpression is seen in the follicle cells.

It is found in the mitochondrion membrane. It carries out the reaction 2,22-dideoxyecdysone + 2 reduced [adrenodoxin] + O2 + 2 H(+) = 2-deoxyecdysone + 2 oxidized [adrenodoxin] + H2O. Its pathway is steroid biosynthesis; ecdysteroid biosynthesis. In terms of biological role, required for CNS development; negatively regulates glial cell division in the embryonic midline. Involved in the metabolism of insect hormones; responsible for ecdysteroid C22-hydroxylase activity. May be involved in the breakdown of synthetic insecticides. The polypeptide is Cytochrome P450 302a1, mitochondrial (Drosophila melanogaster (Fruit fly)).